We begin with the raw amino-acid sequence, 518 residues long: Protein translocase subunit SecD (518 aa).

6 consecutive transmembrane segments (helical) span residues 9-29, 361-381, 384-404, 406-426, 452-474, and 486-506; these read IFLS…NFMQ, LIGF…LGLF, IALS…QATL, LPGI…NVLI, FATI…IFGV, and IGII…IDIW.

This sequence belongs to the SecD/SecF family. SecD subfamily. As to quaternary structure, forms a complex with SecF. Part of the essential Sec protein translocation apparatus which comprises SecA, SecYEG and auxiliary proteins SecDF-YajC and YidC.

Its subcellular location is the cell inner membrane. Part of the Sec protein translocase complex. Interacts with the SecYEG preprotein conducting channel. SecDF uses the proton motive force (PMF) to complete protein translocation after the ATP-dependent function of SecA. In Rickettsia felis (strain ATCC VR-1525 / URRWXCal2) (Rickettsia azadi), this protein is Protein translocase subunit SecD.